A 413-amino-acid chain; its full sequence is Calmodulin-binding protein CmbB (413 aa).

FNIP repeat units follow at residues 104–148 (FNHP…LSDC), 149–192 (YNQA…LGKG), 222–257 (SLPP…FGDG), 258–301 (FNQP…FHQF), 304–343 (FSQT…FSEK), and 344–386 (YNHP…LNGY).

Interacts with calmodulin in the presence of Ca(2+).

In Dictyostelium discoideum (Social amoeba), this protein is Calmodulin-binding protein CmbB.